A 159-amino-acid chain; its full sequence is Cyclic pyranopterin monophosphate synthase (159 aa).

Residues 75–77 (LCH) and 113–114 (ME) contribute to the substrate site. Residue D128 is part of the active site.

It belongs to the MoaC family. As to quaternary structure, homohexamer; trimer of dimers.

The enzyme catalyses (8S)-3',8-cyclo-7,8-dihydroguanosine 5'-triphosphate = cyclic pyranopterin phosphate + diphosphate. It functions in the pathway cofactor biosynthesis; molybdopterin biosynthesis. Catalyzes the conversion of (8S)-3',8-cyclo-7,8-dihydroguanosine 5'-triphosphate to cyclic pyranopterin monophosphate (cPMP). This is Cyclic pyranopterin monophosphate synthase from Serratia proteamaculans (strain 568).